Reading from the N-terminus, the 181-residue chain is Inner membrane-spanning protein YciB (181 aa).

The next 5 helical transmembrane spans lie at 8-28 (FPIICFFVAYKFWGIYIATAA), 53-73 (ITLIFILLLGSFTLVFHNAIF), 76-96 (WKPTIVYWIFAIVLFGSHFFG), 121-141 (LSWALFFLILGVLNLFVVYNF), and 149-169 (FKLFGTLVLMLVFILGQAFYI).

The protein belongs to the YciB family.

The protein localises to the cell inner membrane. Its function is as follows. Plays a role in cell envelope biogenesis, maintenance of cell envelope integrity and membrane homeostasis. This Coxiella burnetii (strain CbuG_Q212) (Coxiella burnetii (strain Q212)) protein is Inner membrane-spanning protein YciB.